We begin with the raw amino-acid sequence, 114 residues long: rRNA-processing protein cgrA (114 aa).

A compositionally biased stretch (polar residues) spans 1–11 (MSSAIPTSSVN). The segment at 1–114 (MSSAIPTSSV…REKRNKLLHS (114 aa)) is disordered. Over residues 39 to 93 (YEKRLEARKRQEAVKEHERELREEKEAERKAQIQKIKDRRAAKEEKERYEKMAEK) the composition is skewed to basic and acidic residues. The stretch at 40-101 (EKRLEARKRQ…EKMHRKRVER (62 aa)) forms a coiled coil. Residues 94-114 (MHRKRVERLKRREKRNKLLHS) are compositionally biased toward basic residues.

This sequence belongs to the CGR1 family.

It is found in the nucleus. It localises to the nucleolus. Functionally, involved in nucleolar integrity and required for processing of the pre-rRNA for the 60S ribosome subunit. This is rRNA-processing protein cgrA (cgrA) from Aspergillus fumigatus (strain ATCC MYA-4609 / CBS 101355 / FGSC A1100 / Af293) (Neosartorya fumigata).